Consider the following 216-residue polypeptide: Somatotropin (216 aa).

Residues 1-25 form the signal peptide; that stretch reads MAPGSWFSPLLIAVVTLGLPQEAAA. His45 is a Zn(2+) binding site. Cys78 and Cys189 are disulfide-bonded. Residue Glu198 coordinates Zn(2+). Residues Cys206 and Cys214 are joined by a disulfide bond.

This sequence belongs to the somatotropin/prolactin family.

It localises to the secreted. Functionally, growth hormone plays an important role in growth control. The chain is Somatotropin (GH) from Gallus gallus (Chicken).